The sequence spans 906 residues: Catenin alpha-1 (906 aa).

An N-acetylthreonine modification is found at T2. The tract at residues 2 to 228 is involved in homodimerization; it reads TAVHTGNINF…PILYTASQAC (227 aa). Residue K57 forms a Glycyl lysine isopeptide (Lys-Gly) (interchain with G-Cter in SUMO2) linkage. The interval 97–148 is interaction with JUP and CTNNB1; the sequence is VRKQCDLMKSAAGEFADDPCSSVKRGNMVRAARALLSAVTRLLILADMADVY. Phosphoserine is present on residues S264, S268, S295, and S297. Residues 325–394 are interaction with alpha-actinin; that stretch reads TRDDRRERIV…AVMDHVSDSF (70 aa). T634 carries the phosphothreonine modification. Phosphoserine is present on S641. T645 carries the phosphothreonine modification. Phosphoserine occurs at positions 652 and 655. A Phosphothreonine modification is found at T658. Residue K797 forms a Glycyl lysine isopeptide (Lys-Gly) (interchain with G-Cter in SUMO2) linkage. The residue at position 851 (S851) is a Phosphoserine. The span at 864–880 shows a compositional bias: basic and acidic residues; sequence PEKKPLVKREKQDETQT. The segment at 864 to 894 is disordered; the sequence is PEKKPLVKREKQDETQTKIKRASQKKHVNPV. Residues 881 to 891 show a composition bias toward basic residues; that stretch reads KIKRASQKKHV.

This sequence belongs to the vinculin/alpha-catenin family. Monomer and homodimer; the monomer preferentially binds to CTNNB1 and the homodimer to actin. Component of an cadherin:catenin adhesion complex composed of at least of CDH26, beta-catenin/CTNNB1, alpha-catenin/CTNNA1 and p120 catenin/CTNND1. Possible component of an E-cadherin/ catenin adhesion complex together with E-cadherin/CDH1 and beta-catenin/CTNNB1 or gamma-catenin/JUP; the complex is located to adherens junctions. The stable association of CTNNA1 is controversial as CTNNA1 was shown not to bind to F-actin when assembled in the complex. Alternatively, the CTNNA1-containing complex may be linked to F-actin by other proteins such as LIMA1. Binds AFDN and F-actin. Interacts with ARHGAP21. Interacts with AJUBA. Interacts with LIMA1. Interacts with vinculin/VCL. Interacts with TJP2/ZO2 (via N-terminus). Interacts with TJP1/ZO1 (via N-terminus). Sumoylated. Post-translationally, phosphorylation seems to contribute to the strength of cell-cell adhesion rather than to the basic capacity for cell-cell adhesion.

The protein resides in the cytoplasm. It is found in the cytoskeleton. The protein localises to the cell junction. Its subcellular location is the adherens junction. It localises to the cell membrane. The protein resides in the nucleus. Associates with the cytoplasmic domain of a variety of cadherins. The association of catenins to cadherins produces a complex which is linked to the actin filament network, and which seems to be of primary importance for cadherins cell-adhesion properties. Can associate with both E- and N-cadherins. Originally believed to be a stable component of E-cadherin/catenin adhesion complexes and to mediate the linkage of cadherins to the actin cytoskeleton at adherens junctions. In contrast, cortical actin was found to be much more dynamic than E-cadherin/catenin complexes and CTNNA1 was shown not to bind to F-actin when assembled in the complex suggesting a different linkage between actin and adherens junctions components. The homodimeric form may regulate actin filament assembly and inhibit actin branching by competing with the Arp2/3 complex for binding to actin filaments. Involved in the regulation of WWTR1/TAZ, YAP1 and TGFB1-dependent SMAD2 and SMAD3 nuclear accumulation. May play a crucial role in cell differentiation. The polypeptide is Catenin alpha-1 (Bos taurus (Bovine)).